Consider the following 306-residue polypeptide: Low-density lipoprotein receptor class A domain-containing protein 4 (306 aa).

At 1–64 the chain is on the lumenal side; sequence MPEAGFQATN…PPGIFNSELE (64 aa). In terms of domain architecture, LDL-receptor class A spans 11–48; it reads AFTECKFTCTSGKCLYLGSLVCNQQNDCGDNSDEENCL. Cystine bridges form between cysteine 19–cysteine 38 and cysteine 32–cysteine 47. Residues 65 to 85 traverse the membrane as a helical segment; that stretch reads FAQILIIVVVVTVMVVVVVCL. The Cytoplasmic segment spans residues 86 to 306; the sequence is LNHYKVSTRS…GKDRKPGDLV (221 aa). The tract at residues 100-127 is disordered; the sequence is PNQSQRQEDGLQPEGSLWPSDSSVQRPG. Residues 180-183 carry the PPxY motif 1 motif; sequence PPPY. The SMAD interaction motif (SIM) motif lies at 208 to 211; sequence PPNR. A PPxY motif 2 motif is present at residues 252–255; sequence PPTY. The tract at residues 268–306 is disordered; the sequence is FHHQHSNTHRGSRPQFQPNNSEGTIVPIKGKDRKPGDLV. A compositionally biased stretch (basic residues) spans 269 to 279; it reads HHQHSNTHRGS. The segment covering 281 to 290 has biased composition (polar residues); the sequence is PQFQPNNSEG. The segment covering 296 to 306 has biased composition (basic and acidic residues); sequence KGKDRKPGDLV.

The protein belongs to the PMEPA1 family. In terms of assembly, interacts with PMEPA1. Interacts (via the SMAD interaction motif) with SMAD2 and SMAD3. In terms of tissue distribution, detected in all tissues tested.

It is found in the early endosome membrane. Functionally, functions as a negative regulator of TGF-beta signaling and thereby probably plays a role in cell proliferation, differentiation, apoptosis, motility, extracellular matrix production and immunosuppression. In the canonical TGF-beta pathway, ZFYVE9/SARA recruits the intracellular signal transducer and transcriptional modulators SMAD2 and SMAD3 to the TGF-beta receptor. Phosphorylated by the receptor, SMAD2 and SMAD3 then form a heteromeric complex with SMAD4 that translocates to the nucleus to regulate transcription. Through interaction with SMAD2 and SMAD3, LDLRAD4 may compete with ZFYVE9 and SMAD4 and prevent propagation of the intracellular signal. In Mus musculus (Mouse), this protein is Low-density lipoprotein receptor class A domain-containing protein 4 (Ldlrad4).